The following is a 400-amino-acid chain: Argininosuccinate synthase (400 aa).

ATP is bound by residues 10 to 18 (AYSGGVDTS) and A38. Residue Y89 participates in L-citrulline binding. Position 119 (G119) interacts with ATP. T121, N125, and D126 together coordinate L-aspartate. N125 contacts L-citrulline. L-citrulline is bound by residues R129, S177, S186, E262, and Y274.

This sequence belongs to the argininosuccinate synthase family. Type 1 subfamily. Homotetramer.

It is found in the cytoplasm. The catalysed reaction is L-citrulline + L-aspartate + ATP = 2-(N(omega)-L-arginino)succinate + AMP + diphosphate + H(+). It functions in the pathway amino-acid biosynthesis; L-arginine biosynthesis; L-arginine from L-ornithine and carbamoyl phosphate: step 2/3. The chain is Argininosuccinate synthase from Nostoc punctiforme (strain ATCC 29133 / PCC 73102).